Reading from the N-terminus, the 243-residue chain is MSKLIVPQWPQPKGVAACSSTRIGGVSLPPYDSLNLGAHCGDNPDHVEENRKRLFAAGNLPSKPVWLEQVHGKDVLKLTGEPYASKRADASYSNTPGTVCAVMTADCLPVLFCNRAGTEVAAAHAGWRGLCAGVLEETVSCFADNPENILAWLGPAIGPRAFEVGGEVREAFMAVDAKASAAFIQHGDKYLADIYQLARQRLANVGVEQIFGGDRCTYTENETFFSYRRDKTTGRMASFIWLI.

Zn(2+) contacts are provided by H71, C107, and H124.

It belongs to the purine nucleoside phosphorylase YfiH/LACC1 family. In terms of assembly, homodimer. Cu(2+) is required as a cofactor. The cofactor is Zn(2+).

The enzyme catalyses adenosine + phosphate = alpha-D-ribose 1-phosphate + adenine. It catalyses the reaction S-methyl-5'-thioadenosine + phosphate = 5-(methylsulfanyl)-alpha-D-ribose 1-phosphate + adenine. It carries out the reaction inosine + phosphate = alpha-D-ribose 1-phosphate + hypoxanthine. The catalysed reaction is adenosine + H2O + H(+) = inosine + NH4(+). In terms of biological role, purine nucleoside enzyme that catalyzes the phosphorolysis of adenosine and inosine nucleosides, yielding D-ribose 1-phosphate and the respective free bases, adenine and hypoxanthine. Also catalyzes the phosphorolysis of S-methyl-5'-thioadenosine into adenine and S-methyl-5-thio-alpha-D-ribose 1-phosphate. Also has adenosine deaminase activity. May also act as a polyphenol oxidase: able to oxidize syringaldazine and 2,2'-azino-bis(3-ethylbenzthiazoline-6-sulfonic acid) (ABTS) in vitro. This is Purine nucleoside phosphorylase YfiH from Escherichia coli (strain K12).